We begin with the raw amino-acid sequence, 506 residues long: Glutamate--tRNA ligase (506 aa).

A 'HIGH' region motif is present at residues 14–24 (PSPTGYLHIGG). Residues 261 to 265 (KLSKR) carry the 'KMSKS' region motif. Residue lysine 264 coordinates ATP.

It belongs to the class-I aminoacyl-tRNA synthetase family. Glutamate--tRNA ligase type 1 subfamily. As to quaternary structure, monomer.

Its subcellular location is the cytoplasm. It carries out the reaction tRNA(Glu) + L-glutamate + ATP = L-glutamyl-tRNA(Glu) + AMP + diphosphate. Catalyzes the attachment of glutamate to tRNA(Glu) in a two-step reaction: glutamate is first activated by ATP to form Glu-AMP and then transferred to the acceptor end of tRNA(Glu). The polypeptide is Glutamate--tRNA ligase (Roseiflexus sp. (strain RS-1)).